Reading from the N-terminus, the 230-residue chain is Large ribosomal subunit protein uL1 (230 aa).

Belongs to the universal ribosomal protein uL1 family. As to quaternary structure, part of the 50S ribosomal subunit.

Its function is as follows. Binds directly to 23S rRNA. The L1 stalk is quite mobile in the ribosome, and is involved in E site tRNA release. In terms of biological role, protein L1 is also a translational repressor protein, it controls the translation of the L11 operon by binding to its mRNA. The protein is Large ribosomal subunit protein uL1 of Leptospira biflexa serovar Patoc (strain Patoc 1 / Ames).